The sequence spans 650 residues: Primary amine oxidase 1 (650 aa).

The first 19 residues, M1 to G19, serve as a signal peptide directing secretion. N-linked (GlcNAc...) asparagine glycans are attached at residues N2, N34, N62, and N149. C155 and C176 are joined by a disulfide. Residue N235 is glycosylated (N-linked (GlcNAc...) asparagine). F308–S319 lines the substrate pocket. D310 functions as the Proton acceptor in the catalytic mechanism. A disulfide bridge links C329 with C355. L395–Y400 contributes to the substrate binding site. Y398 functions as the Schiff-base intermediate with substrate; via topaquinone in the catalytic mechanism. Residue Y398 is modified to 2',4',5'-topaquinone. Cu cation-binding residues include H453 and H455. Mn(2+) contacts are provided by D462 and D464. A glycan (N-linked (GlcNAc...) asparagine) is linked at N486. Mn(2+)-binding residues include D607 and I608. A Cu cation-binding site is contributed by H618.

This sequence belongs to the copper/topaquinone oxidase family. In terms of assembly, homodimer. Requires L-topaquinone as cofactor. It depends on Cu cation as a cofactor. Zn(2+) serves as cofactor. The cofactor is Mn(2+). Topaquinone (TPQ) is generated by copper-dependent autoxidation of a specific tyrosyl residue. As to expression, expressed in the vascular tissues at the division/differentiation transition zone.

It localises to the secreted. The catalysed reaction is a primary methyl amine + O2 + H2O = an aldehyde + H2O2 + NH4(+). With respect to regulation, repressed by semi-carbazide, a specific and irreversible inhibitor of copper amine oxidases. Oxidizes preferentially the aliphatic diamine putrescine with production of the corresponding aldehyde, ammonia and hydrogen peroxide. May be involved in the regulation of developmental programmed cell death (PCD) in both vascular tissue and the root cap. Required for jasmonic acid-(MeJA) mediated early protoxylem differentiation associated with putrescine levels reduction and H(2)O(2) accumulation in roots. This Arabidopsis thaliana (Mouse-ear cress) protein is Primary amine oxidase 1.